The chain runs to 92 residues: Acylphosphatase (92 aa).

An Acylphosphatase-like domain is found at 5 to 92; sequence RAHVVVSGKV…GEFSGFKIAF (88 aa). Residues Arg-20 and Asn-38 contribute to the active site.

Belongs to the acylphosphatase family.

The catalysed reaction is an acyl phosphate + H2O = a carboxylate + phosphate + H(+). The polypeptide is Acylphosphatase (acyP) (Pelotomaculum thermopropionicum (strain DSM 13744 / JCM 10971 / SI)).